Consider the following 218-residue polypeptide: Small ribosomal subunit protein uS3c (218 aa).

In terms of domain architecture, KH type-2 spans 47–118 (VQKNIRISSG…KLNIAITRIS (72 aa)).

This sequence belongs to the universal ribosomal protein uS3 family. Part of the 30S ribosomal subunit.

The protein localises to the plastid. It localises to the chloroplast. This Arabis hirsuta (Hairy rock-cress) protein is Small ribosomal subunit protein uS3c (rps3).